The sequence spans 445 residues: Neuropeptide Y receptor type 5 (445 aa).

Topologically, residues 1–42 are extracellular; the sequence is MDLELDEYYNKTLATENNTAATRNSDFPVWDDYKSSVDDLQY. N-linked (GlcNAc...) asparagine glycosylation is found at N10 and N17. A helical transmembrane segment spans residues 43-63; the sequence is FLIGLYTFVSLLGFMGNLLIL. Residues 64 to 77 are Cytoplasmic-facing; that stretch reads MALMKKRNQKTTVN. Residues 78 to 98 form a helical membrane-spanning segment; that stretch reads FLIGNLAFSDILVVLFCSPFT. Over 99 to 117 the chain is Extracellular; that stretch reads LTSVLLDQWMFGKVMCHIM. C114 and C198 are disulfide-bonded. The helical transmembrane segment at 118 to 138 threads the bilayer; that stretch reads PFLQCVSVLVSTLILISIAIV. The Cytoplasmic segment spans residues 139-156; that stretch reads RYHMIKHPISNNLTANHG. Residues 157–177 traverse the membrane as a helical segment; sequence YFLIATVWTLGFAICSPLPVF. Over 178-208 the chain is Extracellular; it reads HSLVELQETFGSALLSSRYLCVESWPSDSYR. The chain crosses the membrane as a helical span at residues 209–229; sequence IAFTISLLLVQYILPLVCLTV. At 230–369 the chain is on the cytoplasmic side; the sequence is SHTSVCRSIS…KKRSRSVFYR (140 aa). A helical transmembrane segment spans residues 370–390; sequence LTILILVFAVSWMPLHLFHVV. Residues 391-407 lie on the Extracellular side of the membrane; that stretch reads TDFNDNLISNRHFKLVY. A helical transmembrane segment spans residues 408-428; that stretch reads CICHLLGMMSCCLNPILYGFL. The Cytoplasmic segment spans residues 429-445; it reads NNGIKADLVSLIHCLHM. C442 is lipidated: S-palmitoyl cysteine.

The protein belongs to the G-protein coupled receptor 1 family. Brain; hypothalamus.

It localises to the cell membrane. Its function is as follows. Receptor for neuropeptide Y and peptide YY. The activity of this receptor is mediated by G proteins that inhibit adenylate cyclase activity. Seems to be associated with food intake. Could be involved in feeding disorders. The protein is Neuropeptide Y receptor type 5 (NPY5R) of Homo sapiens (Human).